A 148-amino-acid polypeptide reads, in one-letter code: uncharacterized protein (148 aa).

Positions 36 to 45 (PGAPSAGPMS) are enriched in low complexity. The segment at 36–148 (PGAPSAGPMS…SGTAFFPGTT (113 aa)) is disordered. The segment covering 46–55 (DSNSKGSTPR) has biased composition (polar residues).

This is an uncharacterized protein from Bovine leukemia virus (isolate Japanese BLV-1) (BLV).